A 648-amino-acid chain; its full sequence is Threonine--tRNA ligase (648 aa).

The TGS domain occupies 1-61 (MINITFPDGA…TEDGSIEIVT (61 aa)). The tract at residues 242-540 (DHRKLGKELD…LIENYKGAFP (299 aa)) is catalytic. C336, H387, and H517 together coordinate Zn(2+).

Belongs to the class-II aminoacyl-tRNA synthetase family. In terms of assembly, homodimer. The cofactor is Zn(2+).

The protein resides in the cytoplasm. It carries out the reaction tRNA(Thr) + L-threonine + ATP = L-threonyl-tRNA(Thr) + AMP + diphosphate + H(+). In terms of biological role, catalyzes the attachment of threonine to tRNA(Thr) in a two-step reaction: L-threonine is first activated by ATP to form Thr-AMP and then transferred to the acceptor end of tRNA(Thr). Also edits incorrectly charged L-seryl-tRNA(Thr). The polypeptide is Threonine--tRNA ligase (Streptococcus thermophilus (strain ATCC BAA-250 / LMG 18311)).